Here is a 291-residue protein sequence, read N- to C-terminus: Phosphatidylserine decarboxylase proenzyme (291 aa).

Residues Asp90, His147, and Ser253 each act as charge relay system; for autoendoproteolytic cleavage activity in the active site. Residue Ser253 is the Schiff-base intermediate with substrate; via pyruvic acid; for decarboxylase activity of the active site. Ser253 is modified (pyruvic acid (Ser); by autocatalysis).

It belongs to the phosphatidylserine decarboxylase family. PSD-B subfamily. Prokaryotic type I sub-subfamily. As to quaternary structure, heterodimer of a large membrane-associated beta subunit and a small pyruvoyl-containing alpha subunit. Requires pyruvate as cofactor. Post-translationally, is synthesized initially as an inactive proenzyme. Formation of the active enzyme involves a self-maturation process in which the active site pyruvoyl group is generated from an internal serine residue via an autocatalytic post-translational modification. Two non-identical subunits are generated from the proenzyme in this reaction, and the pyruvate is formed at the N-terminus of the alpha chain, which is derived from the carboxyl end of the proenzyme. The autoendoproteolytic cleavage occurs by a canonical serine protease mechanism, in which the side chain hydroxyl group of the serine supplies its oxygen atom to form the C-terminus of the beta chain, while the remainder of the serine residue undergoes an oxidative deamination to produce ammonia and the pyruvoyl prosthetic group on the alpha chain. During this reaction, the Ser that is part of the protease active site of the proenzyme becomes the pyruvoyl prosthetic group, which constitutes an essential element of the active site of the mature decarboxylase.

It localises to the cell membrane. The enzyme catalyses a 1,2-diacyl-sn-glycero-3-phospho-L-serine + H(+) = a 1,2-diacyl-sn-glycero-3-phosphoethanolamine + CO2. The protein operates within phospholipid metabolism; phosphatidylethanolamine biosynthesis; phosphatidylethanolamine from CDP-diacylglycerol: step 2/2. Its function is as follows. Catalyzes the formation of phosphatidylethanolamine (PtdEtn) from phosphatidylserine (PtdSer). The sequence is that of Phosphatidylserine decarboxylase proenzyme from Photobacterium profundum (strain SS9).